The sequence spans 305 residues: Plant-type L-asparaginase (305 aa).

Catalysis depends on Thr-175, which acts as the Nucleophile. Residues 202 to 205 (RVGD) and 224 to 227 (TGLG) each bind substrate.

This sequence belongs to the Ntn-hydrolase family. Heterotetramer of two alpha and two beta chains arranged as a dimer of alpha/beta heterodimers. The uncleaved protein forms homodimers. Post-translationally, autocleaved. Generates the alpha and beta subunits. The N-terminal residue of the beta subunit is thought to be responsible for the nucleophile hydrolase activity.

The catalysed reaction is L-asparagine + H2O = L-aspartate + NH4(+). In terms of biological role, catalyzes the hydrolysis of L-asparagine into L-aspartate and ammonia. Does not exhibit glutaminase activity. The chain is Plant-type L-asparaginase from Pyrococcus abyssi (strain GE5 / Orsay).